A 245-amino-acid chain; its full sequence is Endonuclease III (245 aa).

Residues 119–138 form the HhH domain; sequence MVDLFTLPGVGRKTANVILG. [4Fe-4S] cluster is bound by residues Cys-198, Cys-205, Cys-208, and Cys-214.

The protein belongs to the Nth/MutY family. It depends on [4Fe-4S] cluster as a cofactor.

It catalyses the reaction 2'-deoxyribonucleotide-(2'-deoxyribose 5'-phosphate)-2'-deoxyribonucleotide-DNA = a 3'-end 2'-deoxyribonucleotide-(2,3-dehydro-2,3-deoxyribose 5'-phosphate)-DNA + a 5'-end 5'-phospho-2'-deoxyribonucleoside-DNA + H(+). In terms of biological role, DNA repair enzyme that has both DNA N-glycosylase activity and AP-lyase activity. The DNA N-glycosylase activity releases various damaged pyrimidines from DNA by cleaving the N-glycosidic bond, leaving an AP (apurinic/apyrimidinic) site. The AP-lyase activity cleaves the phosphodiester bond 3' to the AP site by a beta-elimination, leaving a 3'-terminal unsaturated sugar and a product with a terminal 5'-phosphate. This Mycobacterium leprae (strain TN) protein is Endonuclease III.